Consider the following 253-residue polypeptide: Testis-expressed protein 47 (253 aa).

The polypeptide is Testis-expressed protein 47 (Tex47) (Mus musculus (Mouse)).